Here is a 196-residue protein sequence, read N- to C-terminus: Phosphoheptose isomerase (196 aa).

Positions 34–192 (MVQCLLGGNK…CEIIDTTLFP (159 aa)) constitute an SIS domain. Substrate is bound at residue 49 to 51 (NGG). Zn(2+) contacts are provided by histidine 58 and glutamine 62. Residues glutamine 62, 91–92 (ND), 117–119 (STS), serine 122, and glutamine 172 contribute to the substrate site. The Zn(2+) site is built by glutamine 172 and histidine 180.

This sequence belongs to the SIS family. GmhA subfamily. In terms of assembly, homotetramer. The cofactor is Zn(2+).

It localises to the cytoplasm. The catalysed reaction is 2 D-sedoheptulose 7-phosphate = D-glycero-alpha-D-manno-heptose 7-phosphate + D-glycero-beta-D-manno-heptose 7-phosphate. It functions in the pathway carbohydrate biosynthesis; D-glycero-D-manno-heptose 7-phosphate biosynthesis; D-glycero-alpha-D-manno-heptose 7-phosphate and D-glycero-beta-D-manno-heptose 7-phosphate from sedoheptulose 7-phosphate: step 1/1. Its function is as follows. Catalyzes the isomerization of sedoheptulose 7-phosphate in D-glycero-D-manno-heptose 7-phosphate. This chain is Phosphoheptose isomerase, found in Colwellia psychrerythraea (strain 34H / ATCC BAA-681) (Vibrio psychroerythus).